The sequence spans 634 residues: MSDSFYRYDVIVIGGGHAGTEAALASARTGARTLLLTHNIETVGAMSCNPAIGGIGKGHLVKEIDGLGGAMARAADLAGIQWRTLNASKGPAVRATRCQADRNLYRTAIRCIVEAQPNLTVFQAAVDDLIIHNGTSEADSVRGVITQTGLRFQAPSVVLTAGTFLAGKIHVGETQYAAGRMGDPPATTLAARLRERPFAIDRLKTGTPPRIDGRTLDYGVMAEQPGDDPLPVMSFMGQVSDHPRQVSCWITQTTEQTHEIIRNALHRSPLYSGQIEGIGPRYCPSIEDKVVRFAEKTSHQIFVEPEGLEVAEIYPNGISTSLPFDVQLALVRSIHGFANAHITRPGYAIEYDFFDPRGLKASLETKAVGGLFFAGQINGTTGYEEAAAQGLLAGLNAARHVQGLPAWSPRRDEAYLGVLVDDLITHGTTEPYRMFTSRAEYRLQLREDNADARLTGVGRAMGLVDDARWARFAAKQEAVQRETTRLSALWATPGNALGREVAGALGVTVSRETNVLDLIKRPELTYATLMRVPTLGPGVDDAQVAEQVEISVKYAGYLDRQRDDIARQQRHETTPIPEGFDYASVRGLSIEVQQKLERVRPQHIGQAQRIPGMTPAAISLLLVHLERARRSQVA.

Residue Gly14 to Gly19 coordinates FAD. NAD(+) is bound at residue Gly279 to Phe293.

It belongs to the MnmG family. As to quaternary structure, homodimer. Heterotetramer of two MnmE and two MnmG subunits. The cofactor is FAD.

The protein localises to the cytoplasm. Functionally, NAD-binding protein involved in the addition of a carboxymethylaminomethyl (cmnm) group at the wobble position (U34) of certain tRNAs, forming tRNA-cmnm(5)s(2)U34. The chain is tRNA uridine 5-carboxymethylaminomethyl modification enzyme MnmG from Xanthomonas euvesicatoria pv. vesicatoria (strain 85-10) (Xanthomonas campestris pv. vesicatoria).